A 202-amino-acid chain; its full sequence is dITP/XTP pyrophosphatase (202 aa).

10–15 (TGNAGK) provides a ligand contact to substrate. Mg(2+) contacts are provided by Asp-46 and Asp-75. The active-site Proton acceptor is Asp-75. Substrate contacts are provided by residues Ser-76, 160-163 (FGYD), Lys-183, and 188-189 (HR).

It belongs to the HAM1 NTPase family. In terms of assembly, homodimer. It depends on Mg(2+) as a cofactor.

It carries out the reaction XTP + H2O = XMP + diphosphate + H(+). The catalysed reaction is dITP + H2O = dIMP + diphosphate + H(+). The enzyme catalyses ITP + H2O = IMP + diphosphate + H(+). Functionally, pyrophosphatase that catalyzes the hydrolysis of nucleoside triphosphates to their monophosphate derivatives, with a high preference for the non-canonical purine nucleotides XTP (xanthosine triphosphate), dITP (deoxyinosine triphosphate) and ITP. Seems to function as a house-cleaning enzyme that removes non-canonical purine nucleotides from the nucleotide pool, thus preventing their incorporation into DNA/RNA and avoiding chromosomal lesions. The sequence is that of dITP/XTP pyrophosphatase from Idiomarina loihiensis (strain ATCC BAA-735 / DSM 15497 / L2-TR).